A 602-amino-acid polypeptide reads, in one-letter code: Protein NRT1/ PTR FAMILY 5.7 (602 aa).

A run of 2 helical transmembrane segments spans residues 56-73 and 87-107; these read LSYF…TTIL and WSGV…AYLG. A Phosphothreonine modification is found at Thr111. 10 consecutive transmembrane segments (helical) span residues 112–132, 152–172, 197–217, 220–240, 337–357, 381–401, 422–442, 465–485, 500–520, and 548–568; these read VLLA…SWFI, IAFF…KPSL, WWNA…VYIE, IGWG…FFIF, VKLL…GVCA, IVPP…TVTI, ILQR…IAAL, IWLA…LVGL, LGIA…NLLI, and FYWM…IVAM.

Belongs to the major facilitator superfamily. Proton-dependent oligopeptide transporter (POT/PTR) (TC 2.A.17) family. Expressed in shoots, stems, leaves and flowers.

It localises to the membrane. The polypeptide is Protein NRT1/ PTR FAMILY 5.7 (NPF5.7) (Arabidopsis thaliana (Mouse-ear cress)).